The primary structure comprises 432 residues: Enolase (432 aa).

(2R)-2-phosphoglycerate is bound at residue Gln167. The Proton donor role is filled by Glu209. 3 residues coordinate Mg(2+): Asp246, Glu287, and Asp314. Lys339, Arg368, Ser369, and Lys390 together coordinate (2R)-2-phosphoglycerate. Lys339 serves as the catalytic Proton acceptor.

It belongs to the enolase family. The cofactor is Mg(2+).

It is found in the cytoplasm. The protein localises to the secreted. Its subcellular location is the cell surface. The catalysed reaction is (2R)-2-phosphoglycerate = phosphoenolpyruvate + H2O. Its pathway is carbohydrate degradation; glycolysis; pyruvate from D-glyceraldehyde 3-phosphate: step 4/5. Functionally, catalyzes the reversible conversion of 2-phosphoglycerate (2-PG) into phosphoenolpyruvate (PEP). It is essential for the degradation of carbohydrates via glycolysis. In Prochlorococcus marinus (strain SARG / CCMP1375 / SS120), this protein is Enolase.